The following is a 1172-amino-acid chain: Carbamoyl phosphate synthase arginine-specific large chain, chloroplastic (1172 aa).

Polar residues predominate over residues 1–10; that stretch reads MATSLSSAPT. A disordered region spans residues 1-37; sequence MATSLSSAPTQLRPSPSPSHHRLLHRSSLLPFPRRHH. A chloroplast-targeting transit peptide spans 1 to 50; it reads MATSLSSAPTQLRPSPSPSHHRLLHRSSLLPFPRRHHHRRRRCGALSIAR. The interval 72 to 473 is carboxyphosphate synthetic domain; it reads GRLAGVRKIM…SFQKAVRSLE (402 aa). ATP contacts are provided by R199, R240, G246, G247, K279, L281, E286, G312, V313, H314, Q356, and E370. Residues 203–399 form the ATP-grasp 1 domain; the sequence is KQAMDRIGLK…IAKMAAKLSV (197 aa). Residues Q356, E370, and N372 each contribute to the Mg(2+) site. Residues 474 to 623 form an oligomerization domain region; sequence TGFAGWGCAP…YSSYEYECES (150 aa). The carbamoyl phosphate synthetic domain stretch occupies residues 624 to 1019; the sequence is VPTNKKKVLI…GAFAKAQIAA (396 aa). Residues 761-954 form the ATP-grasp 2 domain; the sequence is NAILEELGIE…LAKYASLVMS (194 aa). ATP-binding residues include R797, K836, L838, E843, G869, I870, H871, S872, Q912, and E925. Q912, E925, and N927 together coordinate Mg(2+). Positions 1020 to 1172 are allosteric domain; the sequence is GQKLPLNGTV…QNLQAAQSAS (153 aa). The MGS-like domain occupies 1021-1162; sequence QKLPLNGTVF…QDYFQTTDAS (142 aa).

It belongs to the CarB family. As to quaternary structure, heterodimer composed of 2 chains; the small (or glutamine) chain promotes the hydrolysis of glutamine to ammonia, which is used by the large (or ammonia) chain to synthesize carbamoyl phosphate. Requires Mg(2+) as cofactor. The cofactor is Mn(2+).

Its subcellular location is the plastid. It is found in the chloroplast. It carries out the reaction hydrogencarbonate + L-glutamine + 2 ATP + H2O = carbamoyl phosphate + L-glutamate + 2 ADP + phosphate + 2 H(+). The catalysed reaction is hydrogencarbonate + NH4(+) + 2 ATP = carbamoyl phosphate + 2 ADP + phosphate + 2 H(+). It participates in amino-acid biosynthesis; L-arginine biosynthesis; carbamoyl phosphate from bicarbonate: step 1/1. Large subunit of the arginine-specific carbamoyl phosphate synthase (CPSase). CPSase catalyzes the formation of carbamoyl phosphate from the ammonia moiety of glutamine, hydrogencarbonate, and phosphate donated by ATP, constituting the first step of 2 biosynthetic pathways, one leading to arginine and/or urea and the other to pyrimidine nucleotides. The large subunit (synthetase) binds the substrates ammonia (free or transferred from glutamine from the small subunit), hydrogencarbonate and ATP and carries out an ATP-coupled ligase reaction, activating hydrogencarbonate by forming carboxy phosphate which reacts with ammonia to form carbamoyl phosphate. This Oryza sativa subsp. japonica (Rice) protein is Carbamoyl phosphate synthase arginine-specific large chain, chloroplastic (CARB).